Here is a 335-residue protein sequence, read N- to C-terminus: F420-dependent glucose-6-phosphate dehydrogenase (335 aa).

Coenzyme F420-(gamma-Glu)n is bound at residue D40. H41 serves as the catalytic Proton donor. Coenzyme F420-(gamma-Glu)n-binding positions include T77 and 108–109 (TG). E110 functions as the Proton acceptor in the catalytic mechanism. Coenzyme F420-(gamma-Glu)n contacts are provided by residues N113, 177-178 (GG), and 180-181 (VV). The substrate site is built by T195, K198, K259, and R283.

The protein belongs to the F420-dependent glucose-6-phosphate dehydrogenase family. In terms of assembly, homodimer.

The enzyme catalyses oxidized coenzyme F420-(gamma-L-Glu)(n) + D-glucose 6-phosphate + H(+) = 6-phospho-D-glucono-1,5-lactone + reduced coenzyme F420-(gamma-L-Glu)(n). Its function is as follows. Catalyzes the coenzyme F420-dependent oxidation of glucose 6-phosphate (G6P) to 6-phosphogluconolactone. This Segniliparus rotundus (strain ATCC BAA-972 / CDC 1076 / CIP 108378 / DSM 44985 / JCM 13578) protein is F420-dependent glucose-6-phosphate dehydrogenase.